The sequence spans 580 residues: Frizzled-10-B (580 aa).

Residues 1-20 (MEPRVVTALLLSLAAALCSG) form the signal peptide. Residues 21–224 (ISSINPDRSG…DVYWSKNDKK (204 aa)) lie on the Extracellular side of the membrane. The FZ domain maps to 29 to 150 (SGEGRCQAIE…NDPNYLCMEA (122 aa)). Cystine bridges form between Cys34-Cys95, Cys42-Cys88, Cys79-Cys117, Cys106-Cys147, and Cys110-Cys134. Residue Asn48 is glycosylated (N-linked (GlcNAc...) asparagine). An N-linked (GlcNAc...) asparagine glycan is attached at Asn153. The tract at residues 173–194 (RPNSGHEMYPKDPKGRSSCENS) is disordered. A compositionally biased stretch (basic and acidic residues) spans 180–189 (MYPKDPKGRS). Residues 225–245 (FAFIWIAIWSLLCFFSSAFTV) form a helical membrane-spanning segment. Residues 246 to 261 (LTFLVDPLRFKYPERP) are Cytoplasmic-facing. The chain crosses the membrane as a helical span at residues 262–282 (IIFLSMCYCVYSVGYIIRLFA). Residues 283–309 (GADSIACDRDSGQLYVIQEGLESTGCT) are Extracellular-facing. The chain crosses the membrane as a helical span at residues 310–330 (IVFLILYYFGMASSLWWVILT). The Cytoplasmic segment spans residues 331-350 (LTWFLAAGKKWGHEAIEANS). Residues 351-371 (SYFHLAAWAIPAVKTIMILVM) traverse the membrane as a helical segment. The Extracellular segment spans residues 372–392 (RRVAGDELTGVCYVGSMDVNA). Residues 393–413 (LTGFVLIPLACYLIIGTSFIL) traverse the membrane as a helical segment. The Cytoplasmic segment spans residues 414-442 (SGFVALFHIRRVMKTGGENTDKLEKLMVR). The chain crosses the membrane as a helical span at residues 443–463 (IGVFSVLYTVPATCVIACYFY). The Extracellular segment spans residues 464 to 501 (ERLNMDFWKILATQDKCKMDSQTKTLDCTMTSSIPAVE). The chain crosses the membrane as a helical span at residues 502 to 522 (IFMVKIFMLLVVGITSGMWIW). The Cytoplasmic portion of the chain corresponds to 523–580 (TSKTVQSWQNVFSKSLKKRNRNKPASVITSAGIYKKPQQPPKIHHGKYESALRSPTCV). The Lys-Thr-X-X-X-Trp motif, mediates interaction with the PDZ domain of Dvl family members motif lies at 525–530 (KTVQSW). Residues 558-580 (KPQQPPKIHHGKYESALRSPTCV) are disordered. Residues 578–580 (TCV) carry the PDZ-binding motif.

The protein belongs to the G-protein coupled receptor Fz/Smo family. In terms of tissue distribution, expressed in liver, lung, brain, testis, heart and ovary.

Its subcellular location is the cell membrane. Its function is as follows. Receptor for Wnt proteins. Most of frizzled receptors are coupled to the beta-catenin canonical signaling pathway, which leads to the activation of disheveled proteins, inhibition of GSK-3 kinase, nuclear accumulation of beta-catenin and activation of Wnt target genes. A second signaling pathway involving PKC and calcium fluxes has been seen for some family members, but it is not yet clear if it represents a distinct pathway or if it can be integrated in the canonical pathway, as PKC seems to be required for Wnt-mediated inactivation of GSK-3 kinase. Both pathways seem to involve interactions with G-proteins. May be involved in transduction and intercellular transmission of polarity information during tissue morphogenesis and/or in differentiated tissues. Activated by Wnt8. Could have an antagonizing activity in the morphogenesis during development. The protein is Frizzled-10-B (fzd10-b) of Xenopus laevis (African clawed frog).